The chain runs to 282 residues: MASLRFSVTFPALLSLLLLSLWVVEAYTSRKLISNNEQEGQNISHLFKDGEFEDPTMYMFFKISDLKLGTKLPIYFNKNDLRKVPPLLTRQEADLIPFSESNLDFLLNHFSISKDSPQGKAMKETLKRCDFKAIEGEYKFCGTSLESMLDLAKKTIASNADLKVMTTKVMVPDQNRISYALHNYTFAEVPKELDGIKVLGCHRMPYPYVVYYCHGHKSGTKVFEVNLMSDDGIQLVVGPAVCHMDTSMWNADHVAFKVLKIEPRSAPVCHFFPLDNIVWVSK.

The N-terminal stretch at 1–26 (MASLRFSVTFPALLSLLLLSLWVVEA) is a signal peptide. One can recognise a BURP domain in the interval 60 to 282 (FFKISDLKLG…PLDNIVWVSK (223 aa)).

As to expression, expressed in the radicle and cotyledon of germinating seeds 2 days post-imbibition (DPI), in stems and roots of 30-DPI young plants and in floral buds, but not in fully open flowers or leaves. Expressed in the embryo and seed coat tissues of developing seeds. The protein accumulates only in seeds and only long after transcript accumulation becomes evident.

Its subcellular location is the protein storage vacuole. The protein is BURP domain-containing protein BNM2A of Brassica napus (Rape).